A 218-amino-acid polypeptide reads, in one-letter code: Cytochrome b6 (218 aa).

Residues 35 to 55 (IFYCLGGITLVCFLIQFATGF) traverse the membrane as a helical segment. Cys-38 lines the heme c pocket. The heme b site is built by His-89 and His-103. 3 helical membrane-spanning segments follow: residues 93-113 (ASMM…TGGF), 119-139 (LTWV…VTGY), and 189-209 (LHTF…FLMI). 2 residues coordinate heme b: His-190 and His-205.

The protein belongs to the cytochrome b family. PetB subfamily. In terms of assembly, the 4 large subunits of the cytochrome b6-f complex are cytochrome b6, subunit IV (17 kDa polypeptide, PetD), cytochrome f and the Rieske protein, while the 4 small subunits are PetG, PetL, PetM and PetN. The complex functions as a dimer. The cofactor is heme b. Heme c serves as cofactor.

The protein resides in the cellular thylakoid membrane. Functionally, component of the cytochrome b6-f complex, which mediates electron transfer between photosystem II (PSII) and photosystem I (PSI), cyclic electron flow around PSI, and state transitions. This Prochlorococcus marinus (strain MIT 9515) protein is Cytochrome b6.